The sequence spans 158 residues: Serglycin (158 aa).

Positions 1–27 are cleaved as a signal peptide; the sequence is MMQKLLKCSRLVLALALILVLESSVQG. A disulfide bridge links cysteine 40 with cysteine 49. Residues serine 94 and serine 96 are each glycosylated (O-linked (Xyl...) (glycosaminoglycan) serine). Tandem repeats lie at residues 94-95, 96-97, 98-99, 100-101, 102-103, 104-105, 106-107, 108-109, and 110-111. Positions 94–111 are 9 X 2 AA tandem repeats of [SF]-G; it reads SGSGFGSGSGSGSGSGSG. Serine 100, serine 102, serine 104, serine 106, serine 108, and serine 110 each carry an O-linked (Xyl...) (glycosaminoglycan) serine glycan. The disordered stretch occupies residues 134-158; the sequence is RSLDRNLPSDSQDLGQHGLEEDFML.

Belongs to the serglycin family. Binds to activated CD44 and to GZMB. O-glycosylated; contains chondroitin sulfate and heparan sulfate.

The protein localises to the cytoplasmic granule. The protein resides in the cytolytic granule. It localises to the secreted. It is found in the extracellular space. Its subcellular location is the golgi apparatus. Plays a role in formation of mast cell secretory granules and mediates storage of various compounds in secretory vesicles. Required for storage of some proteases in both connective tissue and mucosal mast cells and for storage of granzyme B in T-lymphocytes. Plays a role in localizing neutrophil elastase in azurophil granules of neutrophils. Mediates processing of MMP2. Plays a role in cytotoxic cell granule-mediated apoptosis by forming a complex with granzyme B which is delivered to cells by perforin to induce apoptosis. Regulates the secretion of TNF-alpha and may also regulate protease secretion. Inhibits bone mineralization. This Homo sapiens (Human) protein is Serglycin (SRGN).